A 453-amino-acid chain; its full sequence is RuvB-like helicase 1 (453 aa).

71-78 contributes to the ATP binding site; sequence GGPGTGKT.

Belongs to the RuvB family. As to quaternary structure, may form heterododecamers with RVB2. Component of the SWR1 chromatin remodeling complex, the INO80 chromatin remodeling complex, and of the R2TP complex.

Its subcellular location is the nucleus. The catalysed reaction is ATP + H2O = ADP + phosphate + H(+). DNA helicase which participates in several chromatin remodeling complexes, including the SWR1 and the INO80 complexes. The SWR1 complex mediates the ATP-dependent exchange of histone H2A for the H2A variant HZT1 leading to transcriptional regulation of selected genes by chromatin remodeling. The INO80 complex remodels chromatin by shifting nucleosomes and is involved in DNA repair. Also involved in pre-rRNA processing. The sequence is that of RuvB-like helicase 1 (RVB1) from Yarrowia lipolytica (strain CLIB 122 / E 150) (Yeast).